The following is a 348-amino-acid chain: Ephrin-4 (348 aa).

Residues 1 to 20 form the signal peptide; sequence MKQFFEFLITTFLLLGLAAA. Residues 21–178 enclose the Ephrin RBD domain; the sequence is DEHIVYWNST…SQNMRLSMKV (158 aa). N28 is a glycosylation site (N-linked (GlcNAc...) asparagine). 2 disulfide bridges follow: C53–C91 and C79–C167. N157 carries an N-linked (GlcNAc...) asparagine glycan. A disordered region spans residues 207 to 237; the sequence is GGQEDEDSDNDNAHLLPRDLEGSTNPKFRRP. S329 carries the GPI-anchor amidated serine lipid modification. The propeptide at 330–348 is removed in mature form; it reads STSLSTNFAILLAVIYVLY.

Belongs to the ephrin family. Interacts with lat-2. Post-translationally, may undergo proteolysis by metalloprotease sup-17 to give rise to a soluble form.

It is found in the cell membrane. Its function is as follows. Regulates the formation or stabilization of cell-cell contacts at several stages of epithelial morphogenesis. In early embryonic development, involved in ventral closure of the epidermis. During male tail morphogenesis, regulates precursor cell sorting together with mab-20 and allows the formation of distinct sensory rays. Probably acts as a ligand for lad-2 to regulate axon guidance of several neurons including SDQL, SDQR, SMD and PLN neurons during neurogenesis. This chain is Ephrin-4 (efn-4), found in Caenorhabditis elegans.